The primary structure comprises 228 residues: Ribonuclease S-1 (228 aa).

The first 27 residues, 1-27, serve as a signal peptide directing secretion; it reads MGVTGMTYMFTMVFSLIVLILSSSTVG. Glutamine 36 lines the RNA pocket. Cysteine 42 and cysteine 49 are oxidised to a cystine. Histidine 60 contacts RNA. Histidine 60 functions as the Proton donor in the catalytic mechanism. Cysteine 75 and cysteine 119 are joined by a disulfide. N-linked (GlcNAc...) asparagine glycosylation occurs at asparagine 87. An RNA-binding site is contributed by 98–99; it reads NV. Asparagine 101 carries N-linked (GlcNAc...) asparagine glycosylation. Residues phenylalanine 108, 111 to 112, and 115 to 116 contribute to the RNA site; these read KE and KH. Glutamate 112 is a catalytic residue. Histidine 116 acts as the Proton acceptor in catalysis. N-linked (GlcNAc...) asparagine glycans are attached at residues asparagine 144, asparagine 157, and asparagine 175. Cystine bridges form between cysteine 183-cysteine 222 and cysteine 199-cysteine 210.

It belongs to the RNase T2 family. Post-translationally, N-linked core structure at Asn-87 and Asn-101 contains xylose and fucose or consists of disaccharide (GlcNAc-GlcNAc). N-linked core structure at Asn-144 contains xylose.

The catalysed reaction is a ribonucleotidyl-ribonucleotide-RNA + H2O = a 3'-end 3'-phospho-ribonucleotide-RNA + a 5'-end dephospho-ribonucleoside-RNA + H(+). Its function is as follows. Self-incompatibility (SI) is the inherited ability of a flowering plant to prevent self-fertilization by discriminating between self and non-self pollen during pollination. In many species, self-incompatibility is controlled by the single, multiallelic locus S. This Pyrus pyrifolia (Chinese pear) protein is Ribonuclease S-1.